A 195-amino-acid chain; its full sequence is GTP cyclohydrolase 1 (195 aa).

3 residues coordinate Zn(2+): Cys-85, His-88, and Cys-157.

This sequence belongs to the GTP cyclohydrolase I family. Toroid-shaped homodecamer, composed of two pentamers of five dimers.

It catalyses the reaction GTP + H2O = 7,8-dihydroneopterin 3'-triphosphate + formate + H(+). The protein operates within cofactor biosynthesis; 7,8-dihydroneopterin triphosphate biosynthesis; 7,8-dihydroneopterin triphosphate from GTP: step 1/1. This chain is GTP cyclohydrolase 1, found in Clostridium acetobutylicum (strain ATCC 824 / DSM 792 / JCM 1419 / IAM 19013 / LMG 5710 / NBRC 13948 / NRRL B-527 / VKM B-1787 / 2291 / W).